The primary structure comprises 157 residues: Nascent polypeptide-associated complex subunit alpha (157 aa).

One can recognise an NAC-A/B domain in the interval 6–71; that stretch reads TTDESHIHKT…LGSPVNLHQL (66 aa). Over residues 81-107 the composition is skewed to basic and acidic residues; it reads SSKDQEGPGLYDEIHSDPQEDGVKEAE. The disordered stretch occupies residues 81-116; sequence SSKDQEGPGLYDEIHSDPQEDGVKEAEEITVDPSDE. The UBA domain occupies 118 to 157; it reads LSEEDIKLISSQVKASRNDIIKALVESEYDVVDAMMKLTK.

It belongs to the NAC-alpha family.

The protein resides in the cytoplasm. It is found in the nucleus. In terms of biological role, may be involved in mitochondrial protein import by enhancing productive ribosome interactions with the outer mitochondrial membrane and blocks the inappropriate interaction of ribosomes translating non-secretory nascent polypeptides with translocation sites in the membrane of the endoplasmic reticulum. EGD2 may also be involved in transcription regulation. In Encephalitozoon cuniculi (strain GB-M1) (Microsporidian parasite), this protein is Nascent polypeptide-associated complex subunit alpha (EGD2).